The chain runs to 174 residues: Translationally-controlled tumor protein homolog 1 (174 aa).

Residues 1-174 enclose the TCTP domain; sequence MRVFKDIVGY…FKDGLESVKY (174 aa).

Belongs to the TCTP family.

The protein localises to the cytoplasm. Its function is as follows. Involved in calcium binding and microtubule stabilization. The chain is Translationally-controlled tumor protein homolog 1 from Dictyostelium discoideum (Social amoeba).